A 487-amino-acid polypeptide reads, in one-letter code: Chromosomal replication initiator protein DnaA (487 aa).

A domain I, interacts with DnaA modulators region spans residues 1–79; it reads MPNSMWHQCL…QAPRVMMKVG (79 aa). A disordered region spans residues 78–138; it reads VGSAPKPTDP…PAPKAQAERR (61 aa). The domain II stretch occupies residues 79-150; it reads GSAPKPTDPV…QVEGDIKHQS (72 aa). Residues 151–367 are domain III, AAA+ region; the sequence is FLNETFTFDT…GALRLVIANA (217 aa). ATP-binding residues include Gly-195, Gly-197, Lys-198, and Thr-199. The interval 368–487 is domain IV, binds dsDNA; that stretch reads HFTGSEITPP…YQNFMRLLTT (120 aa).

It belongs to the DnaA family. In terms of assembly, oligomerizes as a right-handed, spiral filament on DNA at oriC.

Its subcellular location is the cytoplasm. Its function is as follows. Plays an essential role in the initiation and regulation of chromosomal replication. ATP-DnaA binds to the origin of replication (oriC) to initiate formation of the DNA replication initiation complex once per cell cycle. Binds the DnaA box (a 9 base pair repeat at the origin) and separates the double-stranded (ds)DNA. Forms a right-handed helical filament on oriC DNA; dsDNA binds to the exterior of the filament while single-stranded (ss)DNA is stabiized in the filament's interior. The ATP-DnaA-oriC complex binds and stabilizes one strand of the AT-rich DNA unwinding element (DUE), permitting loading of DNA polymerase. After initiation quickly degrades to an ADP-DnaA complex that is not apt for DNA replication. Binds acidic phospholipids. This Marinobacter nauticus (strain ATCC 700491 / DSM 11845 / VT8) (Marinobacter aquaeolei) protein is Chromosomal replication initiator protein DnaA.